A 349-amino-acid polypeptide reads, in one-letter code: MQTTIQKEEAPNRETLLTPRFYTTDFEEMASMNISENEQDFFAILEEFRADYNSQHFIRGEEFNQSWSNLETKTKSLFIEFLERSCTAEFSGFLLYKELSRKLKDSNPIIAECFLLMSRDEARHAGFLNKAIGDFNLSLDLGFLTKTRKYTFFSPKFIFYATYLSEKIGYWRYITIYRHMEQYPEHRIYPIFKFFENWCQDENRHGDFFAALLKSQPHFLNDWKAKMWCRFFLLSVFATMYLNDFQRIDFYNAIGLDSRQYDMQVIRKTNESAARVFPVALDVDNPKFFKYLDSCACNNRALIDIDKKGSQPLVKTFMKAPLYMSLILNLIKIYLIKPIDSQAVWNTVR.

Belongs to the AcsF family. Fe cation serves as cofactor.

The protein localises to the plastid. It is found in the chloroplast. The catalysed reaction is Mg-protoporphyrin IX 13-monomethyl ester + 3 NADPH + 3 O2 + 2 H(+) = 3,8-divinyl protochlorophyllide a + 3 NADP(+) + 5 H2O. The protein operates within porphyrin-containing compound metabolism; chlorophyll biosynthesis (light-independent). Functionally, catalyzes the formation of the isocyclic ring in chlorophyll biosynthesis. Mediates the cyclase reaction, which results in the formation of divinylprotochlorophyllide (Pchlide) characteristic of all chlorophylls from magnesium-protoporphyrin IX 13-monomethyl ester (MgPMME). This chain is Magnesium-protoporphyrin IX monomethyl ester [oxidative] cyclase, found in Porphyra purpurea (Red seaweed).